The primary structure comprises 944 residues: snRNA-activating protein complex subunit 4 homolog (944 aa).

Residues 1–22 (MSDLVMFEPGASTSTDVPTNTD) are disordered. The segment covering 11 to 22 (ASTSTDVPTNTD) has biased composition (polar residues). Positions 177-244 (TSNFDRRQWT…AVKSKWYNEL (68 aa)) constitute a Myb-like 1 domain. The HTH myb-type 1 domain maps to 245 to 301 (NPKWNKEHWSNEEVEKLKYLRESPKFVSWPMLALNLGTNRTSYQCMEKYKTEVSQHS). Positions 273–297 (WPMLALNLGTNRTSYQCMEKYKTEV) form a DNA-binding region, H-T-H motif. A Myb-like 2 domain is found at 304–350 (WSQDEDTKLIALTKITSINGHIQWDKVAQCMPGRTRQQVRTRFSHTL). 2 HTH myb-type domains span residues 351-406 (DASV…NRSA) and 407-459 (HVNE…AAKL). 2 consecutive DNA-binding regions (H-T-H motif) follow at residues 379-402 (WAKV…TNVL) and 432-455 (WAKC…LQLI). Positions 911–921 (ARPARPPRSSA) are enriched in low complexity. Residues 911–935 (ARPARPPRSSAGTPTPSHVSIDTES) form a disordered region. Residues 922 to 935 (GTPTPSHVSIDTES) are compositionally biased toward polar residues.

In terms of tissue distribution, broadly expressed in all tissues, including head, vulva and tail.

The protein localises to the nucleus. Its function is as follows. Binds to the promoter regions of RNA polymerase II and III small-nuclear RNA genes, type 3 RNA polymerase III non-coding RNA genes, small nucleolar RNAs and transfer RNA genes. Required for expression of mature 21U-RNAs. This chain is snRNA-activating protein complex subunit 4 homolog, found in Caenorhabditis elegans.